The chain runs to 72 residues: Putative snRNP Sm-like protein (72 aa).

One can recognise a Sm domain in the interval 4-72 (RPLDILNDAL…RGDNVVYVSP (69 aa)).

Belongs to the snRNP Sm proteins family.

The polypeptide is Putative snRNP Sm-like protein (Methanococcoides burtonii (strain DSM 6242 / NBRC 107633 / OCM 468 / ACE-M)).